The primary structure comprises 47 residues: PhoP/PhoQ regulator MgrB (47 aa).

A helical membrane pass occupies residues 6–26; it reads WVALVVVVLACLLLWAQVFNM.

The protein belongs to the MgrB family. As to quaternary structure, may form homooligomers. Probably interacts with the periplasmic domain of PhoQ.

The protein localises to the cell inner membrane. PhoP-regulated transcription is redox-sensitive, being activated when the periplasm becomes more reducing. MgrB acts between DsbA/DsbB and PhoP/PhoQ in this pathway. Represses PhoP/PhoQ signaling, possibly by binding to the periplasmic domain of PhoQ, altering its activity and that of downstream effector PhoP. The chain is PhoP/PhoQ regulator MgrB from Escherichia coli O127:H6 (strain E2348/69 / EPEC).